The following is a 245-amino-acid chain: Eukaryotic translation initiation factor 6 (245 aa).

Residues S174 and S175 each carry the phosphoserine; by CK1 modification. The residue at position 231 (S231) is a Phosphoserine.

The protein belongs to the eIF-6 family. In terms of assembly, monomer. Associates with the 60S ribosomal subunit. Post-translationally, phosphorylation at Ser-174 and Ser-175 promotes nuclear export.

The protein resides in the cytoplasm. It is found in the nucleus. The protein localises to the nucleolus. Functionally, binds to the 60S ribosomal subunit and prevents its association with the 40S ribosomal subunit to form the 80S initiation complex in the cytoplasm. Is also involved in ribosome biogenesis. Associates with pre-60S subunits in the nucleus and is involved in its nuclear export. Cytoplasmic release of TIF6 from 60S subunits and nuclear relocalization is promoted by the GTPase RIA1/EFL1 and by SDO1. Also required for pre-rRNA processing. The polypeptide is Eukaryotic translation initiation factor 6 (Saccharomyces cerevisiae (strain ATCC 204508 / S288c) (Baker's yeast)).